A 464-amino-acid chain; its full sequence is Putative F-box/LRR-repeat protein At3g59160 (464 aa).

Positions 12-60 (KDMINDLPDALLCHVLSYLTTKEAASTSLLSRRWRYLLAFVPNLEFDDS) constitute an F-box domain. 6 LRR repeats span residues 172–198 (TLKI…HLES), 200–225 (MFDE…VLHH), 233–258 (SCSV…GMHE), 336–367 (VLCL…TIQS), 368–393 (TPKV…VFQG), and 408–433 (KIEK…VLHY).

The chain is Putative F-box/LRR-repeat protein At3g59160 from Arabidopsis thaliana (Mouse-ear cress).